A 200-amino-acid polypeptide reads, in one-letter code: MSFNLGKSLTKLIIASNNDGKIEEFIQLLSGIPLVVMGQPKHLEVEETGVSFAENARIKAIAVAKATGEMALADDSGLSVGSLGGAPGVFSARYANTDLERVSRLLKELEMVDDRSAFFSAALCLASSKGEVLLELDGRCDGIITTTPRGKFGFGYDPIFEVKGTGLTFSEMDSKQKRELSHRGLAVKKLIPSLKKILDS.

16 to 21 (SNNDGK) is a substrate binding site. Mg(2+) is bound by residues glutamate 46 and aspartate 75. The Proton acceptor role is filled by aspartate 75. Substrate-binding positions include serine 76, 154–157 (FGYD), lysine 177, and 182–183 (HR).

The protein belongs to the HAM1 NTPase family. Homodimer. Mg(2+) is required as a cofactor.

It carries out the reaction XTP + H2O = XMP + diphosphate + H(+). The catalysed reaction is dITP + H2O = dIMP + diphosphate + H(+). The enzyme catalyses ITP + H2O = IMP + diphosphate + H(+). In terms of biological role, pyrophosphatase that catalyzes the hydrolysis of nucleoside triphosphates to their monophosphate derivatives, with a high preference for the non-canonical purine nucleotides XTP (xanthosine triphosphate), dITP (deoxyinosine triphosphate) and ITP. Seems to function as a house-cleaning enzyme that removes non-canonical purine nucleotides from the nucleotide pool, thus preventing their incorporation into DNA/RNA and avoiding chromosomal lesions. This Prochlorococcus marinus (strain SARG / CCMP1375 / SS120) protein is dITP/XTP pyrophosphatase.